The primary structure comprises 259 residues: Bidirectional sugar transporter SWEET6a (259 aa).

Residues 1-9 (MISPDAARN) lie on the Extracellular side of the membrane. A helical membrane pass occupies residues 10–30 (VVGIIGNVISFGLFLAPVPTF). The MtN3/slv 1 domain maps to 10-98 (VVGIIGNVIS…IFFLYSPNKK (89 aa)). Residues 31 to 45 (WRICKRKDVEEFKAD) lie on the Cytoplasmic side of the membrane. A helical membrane pass occupies residues 46-66 (PYLATLLNCMLWVFYGIPVVH). Residues 67–69 (PNS) lie on the Extracellular side of the membrane. The helical transmembrane segment at 70–90 (ILVVTINGIGLLVEGTYLLIF) threads the bilayer. Residues 91 to 103 (FLYSPNKKRLRMC) are Cytoplasmic-facing. The helical transmembrane segment at 104-124 (AVLGVELVFMLAVILGVLLGA) threads the bilayer. Residues 125–131 (HTHEKRS) lie on the Extracellular side of the membrane. The helical transmembrane segment at 132-152 (MIVGILCVFFGSIMYFSPLTI) threads the bilayer. The MtN3/slv 2 domain maps to 133–216 (IVGILCVFFG…LILYACYYRT (84 aa)). Residues 153–165 (MGKVIKTKSVEYM) lie on the Cytoplasmic side of the membrane. Residues 166 to 186 (PFFLSLVCFLNGVCWTAYALI) traverse the membrane as a helical segment. The Extracellular segment spans residues 187–189 (RFD). A helical membrane pass occupies residues 190–210 (IYVTIPNGLGALFGAIQLILY). Residues 211–259 (ACYYRTTPKKTKAAKDVEMPSVVVSGTGAAAAAGGGNTGGGSISVTVER) are Cytoplasmic-facing.

The protein belongs to the SWEET sugar transporter family. Forms homooligomers and/or heterooligomers.

Its subcellular location is the cell membrane. In terms of biological role, mediates both low-affinity uptake and efflux of sugar across the plasma membrane. The polypeptide is Bidirectional sugar transporter SWEET6a (SWEET6A) (Oryza sativa subsp. indica (Rice)).